We begin with the raw amino-acid sequence, 511 residues long: Arabinose import ATP-binding protein AraG (511 aa).

ABC transporter domains follow at residues 5-240 (LEFR…MVGR) and 240-501 (RQID…LRPR). Position 37–44 (37–44 (GENGAGKS)) interacts with ATP.

Belongs to the ABC transporter superfamily. Arabinose importer (TC 3.A.1.2.2) family. As to quaternary structure, the complex is composed of two ATP-binding proteins (AraG), two transmembrane proteins (AraH) and a solute-binding protein (AraF).

The protein localises to the cell inner membrane. It carries out the reaction L-arabinose(out) + ATP + H2O = L-arabinose(in) + ADP + phosphate + H(+). Its function is as follows. Part of the ABC transporter complex AraFGH involved in arabinose import. Responsible for energy coupling to the transport system. This is Arabinose import ATP-binding protein AraG from Ralstonia nicotianae (strain ATCC BAA-1114 / GMI1000) (Ralstonia solanacearum).